We begin with the raw amino-acid sequence, 197 residues long: Thymidine kinase (197 aa).

ATP contacts are provided by residues 9–16 and 83–86; these read AAMNAGKS and DESQ. Glu-84 (proton acceptor) is an active-site residue. Zn(2+)-binding residues include Cys-141, Cys-143, Cys-178, and Cys-181.

This sequence belongs to the thymidine kinase family. As to quaternary structure, homotetramer.

It localises to the cytoplasm. It catalyses the reaction thymidine + ATP = dTMP + ADP + H(+). This chain is Thymidine kinase, found in Albidiferax ferrireducens (strain ATCC BAA-621 / DSM 15236 / T118) (Rhodoferax ferrireducens).